The chain runs to 366 residues: Aminomethyltransferase (366 aa).

This sequence belongs to the GcvT family. In terms of assembly, the glycine cleavage system is composed of four proteins: P, T, L and H.

It carries out the reaction N(6)-[(R)-S(8)-aminomethyldihydrolipoyl]-L-lysyl-[protein] + (6S)-5,6,7,8-tetrahydrofolate = N(6)-[(R)-dihydrolipoyl]-L-lysyl-[protein] + (6R)-5,10-methylene-5,6,7,8-tetrahydrofolate + NH4(+). Its function is as follows. The glycine cleavage system catalyzes the degradation of glycine. The polypeptide is Aminomethyltransferase (Bordetella parapertussis (strain 12822 / ATCC BAA-587 / NCTC 13253)).